We begin with the raw amino-acid sequence, 244 residues long: 3-deoxy-manno-octulosonate cytidylyltransferase (244 aa).

This sequence belongs to the KdsB family.

It is found in the cytoplasm. The catalysed reaction is 3-deoxy-alpha-D-manno-oct-2-ulosonate + CTP = CMP-3-deoxy-beta-D-manno-octulosonate + diphosphate. It participates in nucleotide-sugar biosynthesis; CMP-3-deoxy-D-manno-octulosonate biosynthesis; CMP-3-deoxy-D-manno-octulosonate from 3-deoxy-D-manno-octulosonate and CTP: step 1/1. It functions in the pathway bacterial outer membrane biogenesis; lipopolysaccharide biosynthesis. Activates KDO (a required 8-carbon sugar) for incorporation into bacterial lipopolysaccharide in Gram-negative bacteria. This chain is 3-deoxy-manno-octulosonate cytidylyltransferase, found in Ruthia magnifica subsp. Calyptogena magnifica.